The sequence spans 487 residues: 3-octaprenyl-4-hydroxybenzoate carboxy-lyase (487 aa).

Residue N172 coordinates Mn(2+). Prenylated FMN is bound by residues 175-177 (IYR), 189-191 (RWL), and 194-195 (RG). Residue E238 coordinates Mn(2+). D287 (proton donor) is an active-site residue.

It belongs to the UbiD family. As to quaternary structure, homohexamer. Prenylated FMN serves as cofactor. Mn(2+) is required as a cofactor.

The protein localises to the cell membrane. The enzyme catalyses a 4-hydroxy-3-(all-trans-polyprenyl)benzoate + H(+) = a 2-(all-trans-polyprenyl)phenol + CO2. It participates in cofactor biosynthesis; ubiquinone biosynthesis. Catalyzes the decarboxylation of 3-octaprenyl-4-hydroxy benzoate to 2-octaprenylphenol, an intermediate step in ubiquinone biosynthesis. This is 3-octaprenyl-4-hydroxybenzoate carboxy-lyase from Nitrosomonas eutropha (strain DSM 101675 / C91 / Nm57).